Consider the following 172-residue polypeptide: Myosin regulatory light chain 2, smooth muscle major isoform (172 aa).

The segment covering 1–16 has biased composition (basic residues); that stretch reads MSSKRAKAKTTKKRPQ. The interval 1-20 is disordered; the sequence is MSSKRAKAKTTKKRPQRATS. S2 carries the N-acetylserine modification. EF-hand domains follow at residues 29 to 64, 98 to 133, and 134 to 169; these read SQIQ…MGKN, DPED…MGDR, and FTDE…GAKD. Ca(2+)-binding residues include D42, N44, D46, and D53.

As to quaternary structure, myosin is a hexamer of 2 heavy chains and 4 light chains.

Functionally, myosin regulatory subunit that plays an important role in regulation of both smooth muscle and nonmuscle cell contractile activity. Implicated in cytokinesis, receptor capping, and cell locomotion. This Gallus gallus (Chicken) protein is Myosin regulatory light chain 2, smooth muscle major isoform.